The primary structure comprises 789 residues: Trans-4-hydroxy-L-proline dehydratase (789 aa).

Residues 7–663 (ERTKKLREES…IMGASPNGRL (657 aa)) enclose the PFL domain. Cys-434 acts as the Cysteine radical intermediate in catalysis. Glu-436 functions as the Proton acceptor in the catalytic mechanism. One can recognise a Glycine radical domain in the interval 670-789 (EGISPEKGGD…EIIGRTEQTF (120 aa)). At Gly-765 the chain carries Glycine radical.

This sequence belongs to the glycyl radical enzyme (GRE) family. HYPD subfamily. Requires the activating protein PflE to generate the key active site glycyl radical on Gly-765 that is involved in catalysis.

It carries out the reaction trans-4-hydroxy-L-proline = (S)-1-pyrroline-5-carboxylate + H2O + H(+). Its function is as follows. Glycine radical enzyme that catalyzes the dehydration of the non-proteinogenic amino acid trans-4-hydroxy-L-proline (Hyp) to produce delta(1)-pyrroline-5-carboxylate (P5C). Is involved in the anaerobic degradation of 4-hydroxyproline. This chain is Trans-4-hydroxy-L-proline dehydratase, found in Clostridioides difficile (Peptoclostridium difficile).